Reading from the N-terminus, the 327-residue chain is Quinone oxidoreductase (327 aa).

The protein belongs to the zinc-containing alcohol dehydrogenase family. Quinone oxidoreductase subfamily. Homodimer.

The enzyme catalyses 2 a quinone + NADPH + H(+) = 2 a 1,4-benzosemiquinone + NADP(+). This is Quinone oxidoreductase (qor) from Salmonella typhimurium (strain LT2 / SGSC1412 / ATCC 700720).